The chain runs to 348 residues: Sulfate/thiosulfate import ATP-binding protein CysA (348 aa).

Positions 3–237 (IRIQELRKQF…PSSPFVYSFV (235 aa)) constitute an ABC transporter domain. Residue 35–42 (GPSGSGKT) coordinates ATP.

Belongs to the ABC transporter superfamily. Sulfate/tungstate importer (TC 3.A.1.6) family. The complex is composed of two ATP-binding proteins (CysA), two transmembrane proteins (CysT and CysW) and a solute-binding protein (CysP).

It localises to the cell inner membrane. The enzyme catalyses sulfate(out) + ATP + H2O = sulfate(in) + ADP + phosphate + H(+). It carries out the reaction thiosulfate(out) + ATP + H2O = thiosulfate(in) + ADP + phosphate + H(+). In terms of biological role, part of the ABC transporter complex CysAWTP involved in sulfate/thiosulfate import. Responsible for energy coupling to the transport system. This chain is Sulfate/thiosulfate import ATP-binding protein CysA, found in Xylella fastidiosa (strain Temecula1 / ATCC 700964).